A 143-amino-acid chain; its full sequence is Small ribosomal subunit protein bS6 (143 aa).

The segment at 98 to 143 is disordered; the sequence is TEQSLIMKSKDEKGDKPERSERRRRDDEEGEAPAANDNDGDNAEAA. Residues 105–124 show a composition bias toward basic and acidic residues; the sequence is KSKDEKGDKPERSERRRRDD.

It belongs to the bacterial ribosomal protein bS6 family.

Binds together with bS18 to 16S ribosomal RNA. In Xanthomonas euvesicatoria pv. vesicatoria (strain 85-10) (Xanthomonas campestris pv. vesicatoria), this protein is Small ribosomal subunit protein bS6.